The sequence spans 457 residues: Protein unc-93 homolog A (457 aa).

The next 5 membrane-spanning stretches (helical) occupy residues 8 to 28 (VLVVSFGFLLLFTAYGGLQSL), 42 to 62 (ALSTLYGGMLLSSMFLPPLLI), 65 to 85 (LGCKGTIILSMCGYVAFSVGN), 86 to 106 (FFASWYTLIPTSILLGLGAAP), and 140 to 160 (IFFLIFQSSGVWGNLISSLVF). Asn-190 is a glycosylation site (N-linked (GlcNAc...) asparagine). The next 6 membrane-spanning stretches (helical) occupy residues 202–222 (TLLGIYTGSGVLAVLMIAAFL), 257–277 (LCLLILLPLYSGLQQGFLSSE), 291–311 (FVGYVMICFSATDALCSVLYG), 320–340 (AVLYVLGAVTHVSCMIALLLW), 344–364 (ADHLAVFFVFSGLWGVADAVW), and 395–415 (FVIAFGYSMFLCVHVKLYILL).

This sequence belongs to the unc-93 family. In terms of tissue distribution, expressed in testis, small intestine, spleen, prostate and ovary.

Its subcellular location is the cell membrane. This Homo sapiens (Human) protein is Protein unc-93 homolog A (UNC93A).